We begin with the raw amino-acid sequence, 798 residues long: Protocadherin beta-14 (798 aa).

A signal peptide spans 1–26 (MEIRGALDLRKRQVLIFLVLLGLSRA). Over 27–686 (GTESAHYSVA…APAQAQADSL (660 aa)) the chain is Extracellular. 5 consecutive Cadherin domains span residues 35-133 (VAEE…SPTF), 138-242 (ILIK…APEF), 247-347 (YEVQ…PPEV), 352-451 (ITKR…APTF), and 456-561 (YTLF…SPFV). A disulfide bridge connects residues Cys-96 and Cys-102. An N-linked (GlcNAc...) asparagine glycan is attached at Asn-169. N-linked (GlcNAc...) asparagine glycosylation is found at Asn-359, Asn-418, Asn-436, Asn-487, and Asn-567. One can recognise a Cadherin 6 domain in the interval 568-671 (GSAPCTELVP…LVDGFSQPYL (104 aa)). Residues 687-711 (TVYLVVALASVSSLFLFSVLLFVAV) traverse the membrane as a helical segment. Residues 712–798 (RLCRRSRAAS…FRNSFGLNIQ (87 aa)) lie on the Cytoplasmic side of the membrane.

The protein localises to the cell membrane. Potential calcium-dependent cell-adhesion protein. May be involved in the establishment and maintenance of specific neuronal connections in the brain. This Homo sapiens (Human) protein is Protocadherin beta-14 (PCDHB14).